We begin with the raw amino-acid sequence, 522 residues long: Proactivator polypeptide-like 1 (522 aa).

The N-terminal stretch at 1–17 is a signal peptide; that stretch reads MLCALILWSGLLGAARA. The propeptide occupies 18 to 59; sequence SPISVPRECAKGSEVWCQDLQAAAKCRAVRHCQSAVWNKPTV. A Saposin A-type 1 domain is found at 19–59; sequence PISVPRECAKGSEVWCQDLQAAAKCRAVRHCQSAVWNKPTV. Saposin B-type domains are found at residues 60 to 144, 183 to 261, 291 to 371, and 393 to 474; these read KSLP…EPLQ, EGAV…ERES, LGLT…GSKR, and QGSF…HGPK. Disulfide bonds link Cys-64-Cys-140, Cys-67-Cys-134, and Cys-95-Cys-107. A propeptide spanning residues 146–183 is cleaved from the precursor; it reads HLAETTSERPLTQEDANEVMAPFLSNGALSFHPSQMPE. Cystine bridges form between Cys-187–Cys-257, Cys-190–Cys-251, and Cys-216–Cys-227. N-linked (GlcNAc...) asparagine glycosylation is present at Asn-204. Residues 261–290 constitute a propeptide that is removed on maturation; it reads SAHWLTRVAAVDGVPSLEMEMPRTNELQMQ. Cystine bridges form between Cys-295-Cys-367, Cys-298-Cys-361, and Cys-326-Cys-337. Asn-312 carries an N-linked (GlcNAc...) (high mannose) asparagine glycan. The propeptide occupies 371 to 392; sequence RRARSISRAVATTPSLPVDEEN. 3 disulfide bridges follow: Cys-397/Cys-470, Cys-400/Cys-464, and Cys-428/Cys-439. A propeptide spanning residues 475-522 is cleaved from the precursor; that stretch reads TPLLGTDQCVMGPSFWCKSPEAAEMCNALEHCQRLVWKKPVSKINEQP. Positions 476–516 constitute a Saposin A-type 2 domain; that stretch reads PLLGTDQCVMGPSFWCKSPEAAEMCNALEHCQRLVWKKPVS.

It is found in the secreted. In terms of biological role, may activate the lysosomal degradation of sphingolipids. The chain is Proactivator polypeptide-like 1 (Psapl1) from Mus musculus (Mouse).